We begin with the raw amino-acid sequence, 58 residues long: Rho-conotoxin TIA (58 aa).

An N-terminal signal peptide occupies residues 1–16; sequence MFTVFLLVVLATTGVS. Positions 17-38 are excised as a propeptide; it reads FTLDRASDGGNAVAKKSDVTAR. The interaction with ADRA1B stretch occupies residues 40 to 42; it reads NWR. 2 disulfides stabilise this stretch: Cys-43/Cys-49 and Cys-44/Cys-57. The interval 45–47 is lacks the Ser-Xaa-Pro motif that is crucial for potent interaction with nAChR; that stretch reads LIP. At Cys-57 the chain carries Cysteine amide.

The protein belongs to the conotoxin A superfamily. As to expression, expressed by the venom duct.

It localises to the secreted. Functionally, allosteric inhibitor of alpha-1B adrenergic receptors (ADRA1B). Binds to an allosteric modulatory site on transmembrane helix 6 and 7 at the base of extracellular loop 3 of ADRA1B. Also weakly inhibits alpha-1A (ADRA1A) and alpha-1D (ADRA1D) adrenergic receptors in a competitive manner. Potently inhibits contractions of vas deferens, spleen and aorta in response to noradrenaline. May also inhibits nicotinic acetylcholine receptors with a possible distinct nAChR binding mode from other alpha-conotoxins, due to a different three residue motif (lacks the Ser-Xaa-Pro motif). This is Rho-conotoxin TIA from Conus tulipa (Fish-hunting cone snail).